Reading from the N-terminus, the 931-residue chain is Bifunctional glutamine synthetase adenylyltransferase/adenylyl-removing enzyme (931 aa).

The adenylyl removase stretch occupies residues 1-434 (MTLAPADLPA…STEFAALLAP (434 aa)). The adenylyl transferase stretch occupies residues 441–931 (PDALANYWRS…ACIAAELPFA (491 aa)).

Belongs to the GlnE family. Mg(2+) serves as cofactor.

It carries out the reaction [glutamine synthetase]-O(4)-(5'-adenylyl)-L-tyrosine + phosphate = [glutamine synthetase]-L-tyrosine + ADP. The catalysed reaction is [glutamine synthetase]-L-tyrosine + ATP = [glutamine synthetase]-O(4)-(5'-adenylyl)-L-tyrosine + diphosphate. Its function is as follows. Involved in the regulation of glutamine synthetase GlnA, a key enzyme in the process to assimilate ammonia. When cellular nitrogen levels are high, the C-terminal adenylyl transferase (AT) inactivates GlnA by covalent transfer of an adenylyl group from ATP to specific tyrosine residue of GlnA, thus reducing its activity. Conversely, when nitrogen levels are low, the N-terminal adenylyl removase (AR) activates GlnA by removing the adenylyl group by phosphorolysis, increasing its activity. The regulatory region of GlnE binds the signal transduction protein PII (GlnB) which indicates the nitrogen status of the cell. The sequence is that of Bifunctional glutamine synthetase adenylyltransferase/adenylyl-removing enzyme from Stenotrophomonas maltophilia (strain R551-3).